Consider the following 146-residue polypeptide: Catabolic 3-dehydroquinase (146 aa).

Y24 acts as the Proton acceptor in catalysis. Substrate contacts are provided by N78, H84, and D91. Residue H104 is the Proton donor of the active site. Residues 105–106 and R115 each bind substrate; that span reads IT.

This sequence belongs to the type-II 3-dehydroquinase family. In terms of assembly, homododecamer. Adopts a ring-like structure, composed of an arrangement of two hexameric rings stacked on top of one another.

The catalysed reaction is 3-dehydroquinate = 3-dehydroshikimate + H2O. Its pathway is aromatic compound metabolism; 3,4-dihydroxybenzoate biosynthesis; 3,4-dihydroxybenzoate from 3-dehydroquinate: step 1/2. In terms of biological role, is involved in the catabolism of quinate. Allows the utilization of quinate as carbon source via the beta-ketoadipate pathway. This Candida dubliniensis (strain CD36 / ATCC MYA-646 / CBS 7987 / NCPF 3949 / NRRL Y-17841) (Yeast) protein is Catabolic 3-dehydroquinase.